The primary structure comprises 293 residues: HTH-type transcriptional regulator HdfR (293 aa).

Residues 1-58 form the HTH lysR-type domain; that stretch reads MDTELLKTFLEVSRTRHFGRAAESLYLTQSAVSFRIRQLENQLGANLFTRHRNNIRLT. A DNA-binding region (H-T-H motif) is located at residues 18-37; it reads FGRAAESLYLTQSAVSFRIR.

Belongs to the LysR transcriptional regulatory family.

Functionally, negatively regulates the transcription of the flagellar master operon flhDC by binding to the upstream region of the operon. In Yersinia pseudotuberculosis serotype O:1b (strain IP 31758), this protein is HTH-type transcriptional regulator HdfR.